The following is a 414-amino-acid chain: 3-isopropylmalate dehydratase large subunit (414 aa).

[4Fe-4S] cluster contacts are provided by Cys295, Cys353, and Cys356.

The protein belongs to the aconitase/IPM isomerase family. LeuC type 2 subfamily. Heterodimer of LeuC and LeuD. [4Fe-4S] cluster serves as cofactor.

It catalyses the reaction (2R,3S)-3-isopropylmalate = (2S)-2-isopropylmalate. It participates in amino-acid biosynthesis; L-leucine biosynthesis; L-leucine from 3-methyl-2-oxobutanoate: step 2/4. Catalyzes the isomerization between 2-isopropylmalate and 3-isopropylmalate, via the formation of 2-isopropylmaleate. The protein is 3-isopropylmalate dehydratase large subunit of Pyrobaculum islandicum (strain DSM 4184 / JCM 9189 / GEO3).